A 283-amino-acid chain; its full sequence is Mitochondrial intermembrane space import and assembly protein 40 (283 aa).

The transit peptide at 1–35 (MFRPASRALLRAPTPAVGVARGPTRRFISSSTGST) directs the protein to the mitochondrion. At 36 to 46 (KPRSWKNTFIR) the chain is on the mitochondrial matrix side. Residues 47–64 (VGLASGAVYYYNTSSVFA) traverse the membrane as a helical; Signal-anchor for type II membrane protein segment. Over 65 to 283 (ETPSLSFRPE…EKTPEQQTEK (219 aa)) the chain is Mitochondrial intermembrane. The tract at residues 72–136 (RPEAQPKHED…SAEELEAEAD (65 aa)) is disordered. Positions 91-101 (IKPKSREEKKA) are enriched in basic and acidic residues. Low complexity predominate over residues 102-119 (PAAAADAAATPASTGANA). 3 cysteine pairs are disulfide-bonded: Cys-152/Cys-154, Cys-163/Cys-196, and Cys-173/Cys-186. The 45-residue stretch at 160–204 (YGPCGEEFRAAFSCFVYSEEEPKGMDCIDKFKAMQDCFRAHPDVY) folds into the CHCH domain. 2 short sequence motifs (cx9C motif) span residues 163–173 (CGEEFRAAFSC) and 186–196 (CIDKFKAMQDC). The interval 211 to 283 (DEEAGAEANA…EKTPEQQTEK (73 aa)) is disordered. Composition is skewed to basic and acidic residues over residues 237 to 251 (VEKH…DEVK) and 272 to 283 (EQEKTPEQQTEK).

Monomer. The cofactor is Cu(2+). Requires Zn(2+) as cofactor.

Its subcellular location is the mitochondrion inner membrane. Functionally, required for the import and folding of small cysteine-containing proteins (small Tim) in the mitochondrial intermembrane space (IMS). Forms a redox cycle with ERV1 that involves a disulfide relay system. Precursor proteins to be imported into the IMS are translocated in their reduced form into the mitochondria. The oxidized form of MIA40 forms a transient intermolecular disulfide bridge with the reduced precursor protein, resulting in oxidation of the precursor protein that now contains an intramolecular disulfide bond and is able to undergo folding in the IMS. The polypeptide is Mitochondrial intermembrane space import and assembly protein 40 (mia40) (Emericella nidulans (strain FGSC A4 / ATCC 38163 / CBS 112.46 / NRRL 194 / M139) (Aspergillus nidulans)).